The sequence spans 667 residues: Heat shock protein DDB_G0283913 (667 aa).

A run of 2 helical transmembrane segments spans residues 2-22 (FVGT…KKIL) and 224-244 (MFIC…LNEL). Residues 18 to 82 (IKKILKRKKE…ELAKKLNCYI (65 aa)) adopt a coiled-coil conformation. The disordered stretch occupies residues 432–478 (IDDTIQDNDKSGSEVSTPTISSSSSSPLQPIIKDEKDDNIENKSDEA). Over residues 444-457 (SEVSTPTISSSSSS) the composition is skewed to low complexity. A compositionally biased stretch (basic and acidic residues) spans 463–477 (IKDEKDDNIENKSDE). In terms of domain architecture, sHSP spans 551-667 (MVFSSGFKPF…VITFKFEKIG (117 aa)).

It belongs to the small heat shock protein (HSP20) family.

Its subcellular location is the membrane. The polypeptide is Heat shock protein DDB_G0283913 (Dictyostelium discoideum (Social amoeba)).